The primary structure comprises 97 residues: Large ribosomal subunit protein eL21 (97 aa).

The protein belongs to the eukaryotic ribosomal protein eL21 family.

The protein is Large ribosomal subunit protein eL21 of Methanospirillum hungatei JF-1 (strain ATCC 27890 / DSM 864 / NBRC 100397 / JF-1).